The sequence spans 491 residues: MNTQQLAKLRAFVPEMRKVRHIHFVGIGGAGMGGIAEVLANEGYQISGSDLAPNPVTRQLTKLGAQIYFNHRPENILDASVVVASSAILADNPEIVAAREARIPVIRRAEMLAELMRYRHGIAIAGTHGKTTTTAMISSIYAQAGLDPTFVNGGLVKAAGTHARLGSSRYLIAEADESDASFLHLQPMVAVITNIEADHMDTYHGDFENLKQTFINFLHNLPFYGRAVMCIDDPVVKELIPRVGRYITTYGFSEEADVRITHYQQKGAQGYFTVSRQDMADLKVVLNAPGRHNALNAAAAVAVATEEGISGSDILAALAGFQGTGRRFDFLGNFSLEHVNGKGGSAMLVDDYGHHPTEVDATIKAARAGWPDKRIVMIFQPHRYTRTRDLYDDFANVLNQVDVLLMLDVYSAGEVVIPGADSRSLCRTIRSRGKLDPILVSDPAKVTAVLAQVLDGHDLILVQGAGNIGKIARNLAETKLQPSLNEEKHNG.

An ATP-binding site is contributed by 126–132 (GTHGKTT).

The protein belongs to the MurCDEF family.

The protein resides in the cytoplasm. It catalyses the reaction UDP-N-acetyl-alpha-D-muramate + L-alanine + ATP = UDP-N-acetyl-alpha-D-muramoyl-L-alanine + ADP + phosphate + H(+). Its pathway is cell wall biogenesis; peptidoglycan biosynthesis. In terms of biological role, cell wall formation. This Photorhabdus laumondii subsp. laumondii (strain DSM 15139 / CIP 105565 / TT01) (Photorhabdus luminescens subsp. laumondii) protein is UDP-N-acetylmuramate--L-alanine ligase.